Consider the following 518-residue polypeptide: Squalene monooxygenase 1,2 (518 aa).

The next 2 membrane-spanning stretches (helical) occupy residues 3 to 23 (MAFV…WTIF) and 48 to 68 (GPDV…YALA). FAD contacts are provided by residues 58-59 (VG), 78-79 (ER), R86, F91, R158, V174, D337, and M350. The helical transmembrane segment at 448–468 (LFYHLFVISLSSIGQLLSPFP) threads the bilayer.

It belongs to the squalene monooxygenase family. Requires FAD as cofactor.

Its subcellular location is the membrane. It catalyses the reaction squalene + reduced [NADPH--hemoprotein reductase] + O2 = (S)-2,3-epoxysqualene + oxidized [NADPH--hemoprotein reductase] + H2O + H(+). It functions in the pathway terpene metabolism; lanosterol biosynthesis; lanosterol from farnesyl diphosphate: step 2/3. Its function is as follows. Catalyzes the stereospecific oxidation of squalene to (S)-2,3-epoxysqualene, and is considered to be a rate-limiting enzyme in steroid biosynthesis. The protein is Squalene monooxygenase 1,2 (SQP1,2) of Brassica napus (Rape).